A 254-amino-acid polypeptide reads, in one-letter code: Ribosomal RNA large subunit methyltransferase E (254 aa).

The disordered stretch occupies residues 1–28 (MTTPPRGPDGRPLKVRVKKSRGRTTSSQ). The span at 13-22 (LKVRVKKSRG) shows a compositional bias: basic residues. 5 residues coordinate S-adenosyl-L-methionine: Gly-80, Trp-82, Asp-103, Asp-119, and Asp-143. Residue Lys-183 is the Proton acceptor of the active site. The disordered stretch occupies residues 231–254 (DRAETDDAGTDGTGTAEAQAPRDQ).

The protein belongs to the class I-like SAM-binding methyltransferase superfamily. RNA methyltransferase RlmE family.

It is found in the cytoplasm. The enzyme catalyses uridine(2552) in 23S rRNA + S-adenosyl-L-methionine = 2'-O-methyluridine(2552) in 23S rRNA + S-adenosyl-L-homocysteine + H(+). Functionally, specifically methylates the uridine in position 2552 of 23S rRNA at the 2'-O position of the ribose in the fully assembled 50S ribosomal subunit. The polypeptide is Ribosomal RNA large subunit methyltransferase E (Xanthobacter autotrophicus (strain ATCC BAA-1158 / Py2)).